The chain runs to 466 residues: UDP-N-acetylmuramate--L-alanine ligase (466 aa).

119–125 (GTHGKTT) contributes to the ATP binding site.

The protein belongs to the MurCDEF family.

The protein resides in the cytoplasm. It catalyses the reaction UDP-N-acetyl-alpha-D-muramate + L-alanine + ATP = UDP-N-acetyl-alpha-D-muramoyl-L-alanine + ADP + phosphate + H(+). Its pathway is cell wall biogenesis; peptidoglycan biosynthesis. Its function is as follows. Cell wall formation. This Cytophaga hutchinsonii (strain ATCC 33406 / DSM 1761 / CIP 103989 / NBRC 15051 / NCIMB 9469 / D465) protein is UDP-N-acetylmuramate--L-alanine ligase.